The sequence spans 611 residues: O-fucosyltransferase 8 (611 aa).

The segment at 1–29 (MGKQGSPRSPRPETIDKEEKFGRRSLDSL) is disordered. Residues 10-26 (PRPETIDKEEKFGRRSL) are compositionally biased toward basic and acidic residues. A helical; Signal-anchor for type II membrane protein transmembrane segment spans residues 78-98 (IVLMISVTGFIFCMDSIMVSI). N115, N216, and N270 each carry an N-linked (GlcNAc...) asparagine glycan. Residue 386–388 (HLR) coordinates substrate. The N-linked (GlcNAc...) asparagine glycan is linked to N506.

The protein belongs to the glycosyltransferase GT106 family.

Its subcellular location is the membrane. It functions in the pathway glycan metabolism. The polypeptide is O-fucosyltransferase 8 (Arabidopsis thaliana (Mouse-ear cress)).